The sequence spans 173 residues: Translation initiation factor IF-3 (173 aa).

Belongs to the IF-3 family. In terms of assembly, monomer.

The protein resides in the cytoplasm. Functionally, IF-3 binds to the 30S ribosomal subunit and shifts the equilibrium between 70S ribosomes and their 50S and 30S subunits in favor of the free subunits, thus enhancing the availability of 30S subunits on which protein synthesis initiation begins. The chain is Translation initiation factor IF-3 from Ehrlichia chaffeensis (strain ATCC CRL-10679 / Arkansas).